Here is a 339-residue protein sequence, read N- to C-terminus: MTIKVSIDASGGDYGISVTIKAGIKALDVFQDLYLYFVGDESSIKAELNKHLSNTFSSRYTIIHASEVVLMNESPAIALRKKKDSSMRVAINLVKTLKVNACVSAGNTGALMAISRFVLRTIKGIDRPAIMGRMPTMIGHTHMLDLGANVDSKPEALIEFATMGSIAVKHIENIVSPTIGLLNIGEEDMKGSEKIKKTAELLKASNLNYVGFVEGDDIYKGTVNLIVCDGFEGNIALKASEGVVLMMGYYLKQAFTRNLLTKLVALIATPVLRDFKSSLNPGKYNGASLLGLQGIVVKSHGSANVDSFLAAITEAYVEAHAKISDKISLQISKELEHNE.

It belongs to the PlsX family. As to quaternary structure, homodimer. Probably interacts with PlsY.

It is found in the cytoplasm. The enzyme catalyses a fatty acyl-[ACP] + phosphate = an acyl phosphate + holo-[ACP]. The protein operates within lipid metabolism; phospholipid metabolism. Functionally, catalyzes the reversible formation of acyl-phosphate (acyl-PO(4)) from acyl-[acyl-carrier-protein] (acyl-ACP). This enzyme utilizes acyl-ACP as fatty acyl donor, but not acyl-CoA. The polypeptide is Phosphate acyltransferase (Ruthia magnifica subsp. Calyptogena magnifica).